Consider the following 78-residue polypeptide: Putative membrane protein insertion efficiency factor (78 aa).

The protein belongs to the UPF0161 family.

Its subcellular location is the cell membrane. Its function is as follows. Could be involved in insertion of integral membrane proteins into the membrane. The polypeptide is Putative membrane protein insertion efficiency factor (Bacillus cereus (strain G9842)).